The sequence spans 98 residues: NADH-ubiquinone oxidoreductase chain 4L (98 aa).

3 helical membrane passes run 1–21 (MSLVYMNIMTAFMVALAGLLM), 29–49 (SLLCLEGMMLSLFVMASLTIL), and 59–79 (MPIILLVFAACEAALGLSLLV).

Belongs to the complex I subunit 4L family. Core subunit of respiratory chain NADH dehydrogenase (Complex I) which is composed of 45 different subunits.

It is found in the mitochondrion inner membrane. The catalysed reaction is a ubiquinone + NADH + 5 H(+)(in) = a ubiquinol + NAD(+) + 4 H(+)(out). Its function is as follows. Core subunit of the mitochondrial membrane respiratory chain NADH dehydrogenase (Complex I) which catalyzes electron transfer from NADH through the respiratory chain, using ubiquinone as an electron acceptor. Part of the enzyme membrane arm which is embedded in the lipid bilayer and involved in proton translocation. In Cervus elaphus (Red deer), this protein is NADH-ubiquinone oxidoreductase chain 4L (MT-ND4L).